The sequence spans 365 residues: Serine/threonine-protein phosphatase 2A activator 1 (365 aa).

The disordered stretch occupies residues 321-349 (YEAPSETSEKPAAGTAHTTTTTMPPPRMT). Residues 331–342 (PAAGTAHTTTTT) are compositionally biased toward low complexity.

Belongs to the PTPA-type PPIase family.

It is found in the cytoplasm. The protein resides in the nucleus. The enzyme catalyses [protein]-peptidylproline (omega=180) = [protein]-peptidylproline (omega=0). In terms of biological role, PPIases accelerate the folding of proteins. It catalyzes the cis-trans isomerization of proline imidic peptide bonds in oligopeptides. Acts as a regulatory subunit for PP2A-like phosphatases modulating their activity or substrate specificity, probably by inducing a conformational change in the catalytic subunit, a direct target of the PPIase. Can reactivate inactive phosphatase PP2A-phosphatase methylesterase complexes (PP2Ai) in presence of ATP and Mg(2+) by dissociating the inactive form from the complex. In Eremothecium gossypii (strain ATCC 10895 / CBS 109.51 / FGSC 9923 / NRRL Y-1056) (Yeast), this protein is Serine/threonine-protein phosphatase 2A activator 1 (RRD1).